Reading from the N-terminus, the 586-residue chain is Ferredoxin--nitrite reductase, chloroplastic (586 aa).

A compositionally biased stretch (low complexity) spans 1–18; it reads MTSFSLTFTSPLLPSSST. The tract at residues 1 to 20 is disordered; that stretch reads MTSFSLTFTSPLLPSSSTKP. The transit peptide at 1 to 25 directs the protein to the chloroplast; it reads MTSFSLTFTSPLLPSSSTKPKRSVL. Residue Lys103 forms a Glycyl lysine isopeptide (Lys-Gly) (interchain with G-Cter in ubiquitin) linkage. Positions 464, 470, 505, and 509 each coordinate [4Fe-4S] cluster. Siroheme is bound at residue Cys509.

The protein belongs to the nitrite and sulfite reductase 4Fe-4S domain family. In terms of assembly, monomer. Siroheme is required as a cofactor. It depends on [4Fe-4S] cluster as a cofactor.

It localises to the plastid. Its subcellular location is the chloroplast. The enzyme catalyses 6 oxidized [2Fe-2S]-[ferredoxin] + NH4(+) + 2 H2O = nitrite + 6 reduced [2Fe-2S]-[ferredoxin] + 8 H(+). The protein operates within nitrogen metabolism; nitrate reduction (assimilation). Catalyzes the six-electron reduction of nitrite to ammonium. The polypeptide is Ferredoxin--nitrite reductase, chloroplastic (NIR1) (Arabidopsis thaliana (Mouse-ear cress)).